The sequence spans 360 residues: Peptide chain release factor 1 (360 aa).

The residue at position 235 (Q235) is an N5-methylglutamine. A compositionally biased stretch (basic and acidic residues) spans 281–307 (ERQRADSERSADRRSQVGSGDRSERIR). The segment at 281–311 (ERQRADSERSADRRSQVGSGDRSERIRTYNF) is disordered.

Belongs to the prokaryotic/mitochondrial release factor family. In terms of processing, methylated by PrmC. Methylation increases the termination efficiency of RF1.

It localises to the cytoplasm. Functionally, peptide chain release factor 1 directs the termination of translation in response to the peptide chain termination codons UAG and UAA. The sequence is that of Peptide chain release factor 1 from Rhizobium meliloti (strain 1021) (Ensifer meliloti).